A 257-amino-acid chain; its full sequence is 4-hydroxy-tetrahydrodipicolinate reductase (257 aa).

NAD(+) is bound by residues 7 to 12 (GAAGRM), aspartate 32, 91 to 93 (GTT), and 115 to 118 (SPNF). Histidine 147 serves as the catalytic Proton donor/acceptor. A (S)-2,3,4,5-tetrahydrodipicolinate-binding site is contributed by histidine 148. The active-site Proton donor is lysine 151. 157 to 158 (GT) serves as a coordination point for (S)-2,3,4,5-tetrahydrodipicolinate.

Belongs to the DapB family.

The protein resides in the cytoplasm. The catalysed reaction is (S)-2,3,4,5-tetrahydrodipicolinate + NAD(+) + H2O = (2S,4S)-4-hydroxy-2,3,4,5-tetrahydrodipicolinate + NADH + H(+). It carries out the reaction (S)-2,3,4,5-tetrahydrodipicolinate + NADP(+) + H2O = (2S,4S)-4-hydroxy-2,3,4,5-tetrahydrodipicolinate + NADPH + H(+). The protein operates within amino-acid biosynthesis; L-lysine biosynthesis via DAP pathway; (S)-tetrahydrodipicolinate from L-aspartate: step 4/4. Catalyzes the conversion of 4-hydroxy-tetrahydrodipicolinate (HTPA) to tetrahydrodipicolinate. This Archaeoglobus fulgidus (strain ATCC 49558 / DSM 4304 / JCM 9628 / NBRC 100126 / VC-16) protein is 4-hydroxy-tetrahydrodipicolinate reductase.